Consider the following 382-residue polypeptide: (R,R)-butanediol dehydrogenase (382 aa).

Cys-39 contacts Zn(2+). A Phosphoserine modification is found at Ser-63. Zn(2+) is bound by residues His-73, Cys-103, Cys-120, Cys-123, Cys-131, and Glu-173.

Belongs to the zinc-containing alcohol dehydrogenase family. Homodimer. Zn(2+) serves as cofactor.

Its subcellular location is the cytoplasm. It carries out the reaction (R,R)-butane-2,3-diol + NAD(+) = (R)-acetoin + NADH + H(+). Functionally, NAD-dependent (R,R)-butanediol dehydrogenase which catalyzes oxidation of (R,R)-butane-2,3-diol to (3R)-acetoin, of meso-butanediol to (3S)-acetoin, and reduction of acetoin. Allows the use of 2,3-butanediol as an aerobic carbon source. In Saccharomyces cerevisiae (strain ATCC 204508 / S288c) (Baker's yeast), this protein is (R,R)-butanediol dehydrogenase (BDH1).